We begin with the raw amino-acid sequence, 122 residues long: Large ribosomal subunit protein uL18 (122 aa).

Belongs to the universal ribosomal protein uL18 family. Part of the 50S ribosomal subunit; part of the 5S rRNA/L5/L18/L25 subcomplex. Contacts the 5S and 23S rRNAs.

This is one of the proteins that bind and probably mediate the attachment of the 5S RNA into the large ribosomal subunit, where it forms part of the central protuberance. This Leptospira interrogans serogroup Icterohaemorrhagiae serovar copenhageni (strain Fiocruz L1-130) protein is Large ribosomal subunit protein uL18.